A 332-amino-acid chain; its full sequence is Lipoyl synthase (332 aa).

[4Fe-4S] cluster contacts are provided by C55, C60, C66, C81, C85, C88, and S292. The Radical SAM core domain occupies 67–281 (WEDREATFLI…SDEAERIGFL (215 aa)).

The protein belongs to the radical SAM superfamily. Lipoyl synthase family. It depends on [4Fe-4S] cluster as a cofactor.

Its subcellular location is the cytoplasm. The catalysed reaction is [[Fe-S] cluster scaffold protein carrying a second [4Fe-4S](2+) cluster] + N(6)-octanoyl-L-lysyl-[protein] + 2 oxidized [2Fe-2S]-[ferredoxin] + 2 S-adenosyl-L-methionine + 4 H(+) = [[Fe-S] cluster scaffold protein] + N(6)-[(R)-dihydrolipoyl]-L-lysyl-[protein] + 4 Fe(3+) + 2 hydrogen sulfide + 2 5'-deoxyadenosine + 2 L-methionine + 2 reduced [2Fe-2S]-[ferredoxin]. It participates in protein modification; protein lipoylation via endogenous pathway; protein N(6)-(lipoyl)lysine from octanoyl-[acyl-carrier-protein]: step 2/2. Its function is as follows. Catalyzes the radical-mediated insertion of two sulfur atoms into the C-6 and C-8 positions of the octanoyl moiety bound to the lipoyl domains of lipoate-dependent enzymes, thereby converting the octanoylated domains into lipoylated derivatives. The sequence is that of Lipoyl synthase from Beutenbergia cavernae (strain ATCC BAA-8 / DSM 12333 / CCUG 43141 / JCM 11478 / NBRC 16432 / NCIMB 13614 / HKI 0122).